A 163-amino-acid polypeptide reads, in one-letter code: Beta-lactoglobulin-2 (163 aa).

2 disulfide bridges follow: C66-C161 and C106-C120.

It belongs to the calycin superfamily. Lipocalin family. In terms of assembly, monomer.

Its subcellular location is the secreted. Its function is as follows. Lactoglobulin is the primary component of whey, it binds retinol and is probably involved in the transport of that molecule. The polypeptide is Beta-lactoglobulin-2 (LGB2) (Felis catus (Cat)).